The following is a 139-amino-acid chain: ATP synthase epsilon chain (139 aa).

It belongs to the ATPase epsilon chain family. F-type ATPases have 2 components, CF(1) - the catalytic core - and CF(0) - the membrane proton channel. CF(1) has five subunits: alpha(3), beta(3), gamma(1), delta(1), epsilon(1). CF(0) has three main subunits: a, b and c.

It localises to the cell membrane. Its function is as follows. Produces ATP from ADP in the presence of a proton gradient across the membrane. This is ATP synthase epsilon chain from Symbiobacterium thermophilum (strain DSM 24528 / JCM 14929 / IAM 14863 / T).